A 449-amino-acid chain; its full sequence is Intestinal acid phosphatase (449 aa).

Positions 1-19 (MVSAISIVAIFALEGFVTT) are cleaved as a signal peptide. At 20–428 (YSDGTKDLVF…TDLNKSSSFA (409 aa)) the chain is on the extracellular side. Residue His-36 is the Nucleophile of the active site. Residue Asp-321 is the Proton donor of the active site. A helical membrane pass occupies residues 429–449 (TVSMLFIAAILAINNNFLGLF).

It belongs to the histidine acid phosphatase family. Homodimer. The N-terminus is blocked. As to expression, expressed in the intestine, specifically on the edge of the gut lumen, in the 14 posterior cells of the intestine.

The protein resides in the membrane. The catalysed reaction is a phosphate monoester + H2O = an alcohol + phosphate. Acid phosphatase required for normal growth and development. Specifically required for normal gut differentiation. In Caenorhabditis elegans, this protein is Intestinal acid phosphatase.